The sequence spans 664 residues: Ubiquinol oxidase subunit 1 (664 aa).

Transmembrane regions (helical) follow at residues 15-35 and 57-77; these read PILV…LGLI and LAAM…ADAI. His106 provides a ligand contact to heme b. 12 helical membrane-spanning segments follow: residues 109-129, 136-156, 190-210, 233-253, 278-298, 316-336, 347-367, 383-403, 414-434, 456-476, 490-510, and 603-623; these read IMIF…IVPL, VAFP…FILV, YIWA…NFFV, LCAS…VGLL, LIWA…FGVF, MVYA…HHFF, FFGI…FNWL, WAVG…MLAI, LFLI…GYIC, AFWF…IVGF, AWHP…LGIA, and ALIF…VGLV. Residues His284, Tyr288, His333, and His334 each coordinate Cu cation. The 1'-histidyl-3'-tyrosine (His-Tyr) cross-link spans 284-288; it reads HPEVY. A Fe(II)-heme a-binding site is contributed by His419. Residue His421 participates in heme b binding.

It belongs to the heme-copper respiratory oxidase family. In terms of assembly, heterotetramer of the subunits 1, 2, 3 and 4.

Its subcellular location is the cell membrane. Functionally, catalytic subunit of the enzyme. Electrons originating in a quinol are transferred to the bimetallic center formed by heme a and copper B. The chain is Ubiquinol oxidase subunit 1 (cyaA) from Acetobacter aceti.